The following is a 244-amino-acid chain: Putative membrane peptidase YdiL (244 aa).

6 helical membrane passes run 7–27 (FIIL…PLLF), 44–64 (AQGL…LLIL), 80–100 (IGLS…SQGI), 127–147 (AVPL…EIIF), 159–179 (TNFF…HADL), and 202–222 (IWVP…MQLE). Residues Glu143 and His176 each act as proton donor/acceptor in the active site.

It belongs to the peptidase U48 family.

Its subcellular location is the cell membrane. May function as endopeptidase which proteolytically removes the C-terminal three residues of farnesylated peptides containing the CAAX motif where C is cysteine, A is an aliphatic amino acid and X is any amino acid. The chain is Putative membrane peptidase YdiL (ydiL) from Bacillus subtilis (strain 168).